Reading from the N-terminus, the 632-residue chain is RNA-binding post-transcriptional regulator csx1 (632 aa).

A phosphoserine; by MAPK sty1 mark is found at serine 42 and serine 54. Serine 67 and serine 69 each carry phosphoserine. RRM domains lie at 85–167 (DTLW…WATG) and 182–261 (FSIF…VASP). Serine 291 bears the Phosphoserine; by MAPK sty1 mark. An RRM 3 domain is found at 297–369 (TTVFVGGLAS…SHIRLAWGHN (73 aa)). Serine 455 carries the phosphoserine; by MAPK sty1 modification. Residues 456–476 (PPPLSRSASISPTLSGSGSGL) are disordered. Residues 466–476 (SPTLSGSGSGL) are compositionally biased toward low complexity.

Interacts with cip1 and cip2.

It localises to the cytoplasm. Functionally, regulates global gene expression after oxidative stress. Interacts and stabilizes atf1 and pcr1 mRNAs after oxidative stress, thus controlling their turnover. This chain is RNA-binding post-transcriptional regulator csx1 (csx1), found in Schizosaccharomyces pombe (strain 972 / ATCC 24843) (Fission yeast).